Consider the following 1755-residue polypeptide: MESQQLSQHSPISHGSACASVTSKEVHTNQDPLDVSASKTEECEKASTKANSQQTTTPASSAVPENPHHASPQPASVPPPQNGPYPQQCMMTQNQANPSGWSFYGHPSMIPYTPYQMSPMYFPPGPQSQFPQYPSSVGTPLSTPSPESGNTFTDSSSADSDMTSTKKYVRPPPMLTSPNDFPNWVKTYIKFLQNSNLGGIIPTVNGKPVRQITDDELTFLYNTFQIFAPSQFLPTWVKDILSVDYTDIMKILSKSIEKMQSDTQEANDIVTLANLQYNGSTPADAFETKVTNIIDRLNNNGIHINNKVACQLIMRGLSGEYKFLRYTRHRHLNMTVAELFLDIHAIYEEQQGSRNSKPNYRRNLSDEKNDSRSYTNTTKPKVIARNPQKTNNSKSKTARAHNVSTSNNSPSTDNDSISKSTTEPIQLNNKHDLHLGQELTESTVNHTNHSDDELPGHLLLDSGASRTLIRSAHHIHSASSNPDINVVDAQKRNIPINAIGDLQFHFQDNTKTSIKVLHTPNIAYDLLSLNELAAVDITACFTKNVLERSDGTVLAPIVKYGDFYWVSKKYLLPSNISVPTINNVHTSESTRKYPYPFIHRMLAHANAQTIRYSLKNNTITYFNESDVDWSSAIDYQCPDCLIGKSTKHRHIKGSRLKYQNSYEPFQYLHTDIFGPVHNLPNSAPSYFISFTDETTKFRWVYPLHDRREDSILDVFTTILAFIKNQFQASVLVIQMDRGSEYTNRTLHKFLEKNGITPCYTTTADSRAHGVAERLNRTLLDDCRTQLQCSGLPNHLWFSAIEFSTIVRNSLASPKSKKSARQHAGLAGLDISTLLPFGQPVIVNDHNPNSKIHPRGIPGYALHPSRNSYGYIIYLPSLKKTVDTTNYVILQGKESRLDQFNYDALTFDEDLNRLTASYHSFIASNEIQESNDLNIESDHDFQSDIELHPEQPRNVLSKAVSPTDSTPPSTHTEDSKRVSKTNIRAPREVDPNISESNILPSKKRSSTPQISNIESTGSGGMHKLNVPLLAPMSQSNTHESSHASKSKDFRHSDSYSENETNHTNVPISSTGGTNNKTVPQISDQETEKRIIHRSPSIDASPPENNSSHNIVPIKTPTTVSEQNTEESIIADLPLPDLPPESPTEFPDPFKELPPINSRQTNSSLGGIGDSNAYTTINSKKRSLEDNETEIKVSRDTWNTKNMRSLEPPRSKKRIHLIAAVKAVKSIKPIRTTLRYDEAITYNKDIKEKEKYIEAYHKEVNQLLKMKTWDTDEYYDRKEIDPKRVINSMFIFNKKRDGTHKARFVARGDIQHPDTYDSGMQSNTVHHYALMTSLSLALDNNYYITQLDISSAYLYADIKEELYIRPPPHLGMNDKLIRLKKSLYGLKQSGANWYETIKSYLIKQCGMEEVRGWSCVFKNSQVTICLFVDDMILFSKDLNANKKIITTLKKQYDTKIINLGESDNEIQYDILGLEIKYQRGKYMKLGMENSLTEKIPKLNVPLNPKGRKLSAPGQPGLYIDQDELEIDEDEYKEKVHEMQKLIGLASYVGYKFRFDLLYYINTLAQHILFPSRQVLDMTYELIQFMWDTRDKQLIWHKNKPTEPDNKLVAISDASYGNQPYYKSQIGNIYLLNGKVIGGKSTKASLTCTSTTEAEIHAISESVPLLNNLSYLIQELNKKPIIKGLLTDSRSTISIIKSTNEEKFRNRFFGTKAMRLRDEVSGNNLYVYYIETKKNIADVMTKPLPIKTFKLLTNKWIH.

Composition is skewed to polar residues over residues 1 to 23 (MESQ…SVTS), 48 to 60 (TKAN…TPAS), and 127 to 152 (QSQF…GNTF). Disordered stretches follow at residues 1–93 (MESQ…MMTQ), 126–174 (PQSQ…PPPM), and 352–421 (GSRN…SKST). A compositionally biased stretch (low complexity) spans 153 to 165 (TDSSSADSDMTST). The segment at 299–401 (NNGIHINNKV…NSKSKTARAH (103 aa)) is RNA-binding. Residues 402–418 (NVSTSNNSPSTDNDSIS) show a composition bias toward low complexity. Residue Ser416 is modified to Phosphoserine. Asp461 (for protease activity; shared with dimeric partner) is an active-site residue. The tract at residues 583–640 (NVHTSESTRKYPYPFIHRMLAHANAQTIRYSLKNNTITYFNESDVDWSSAIDYQCPDC) is integrase-type zinc finger-like. The Integrase catalytic domain occupies 660–835 (NSYEPFQYLH…AGLDISTLLP (176 aa)). Residues Asp671 and Asp736 each contribute to the Mg(2+) site. Disordered stretches follow at residues 956 to 1087 (SKAV…ETEK), 1092 to 1111 (RSPS…NIVP), and 1130 to 1187 (DLPL…DNET). The segment covering 960–969 (SPTDSTPPST) has biased composition (low complexity). Residues 1005-1015 (STPQISNIEST) are compositionally biased toward polar residues. The segment covering 1038–1053 (ESSHASKSKDFRHSDS) has biased composition (basic and acidic residues). Polar residues-rich tracts occupy residues 1054–1082 (YSEN…QISD) and 1101–1111 (PENNSSHNIVP). Residues 1178–1212 (KKRSLEDNETEIKVSRDTWNTKNMRSLEPPRSKKR) carry the Bipartite nuclear localization signal motif. The 139-residue stretch at 1338–1476 (NNYYITQLDI…DILGLEIKYQ (139 aa)) folds into the Reverse transcriptase Ty1/copia-type domain. Mg(2+) is bound by residues Asp1346, Asp1427, Asp1428, Asp1610, Glu1652, and Asp1685. The RNase H Ty1/copia-type domain maps to 1610 to 1752 (DASYGNQPYY…IKTFKLLTNK (143 aa)).

The capsid protein forms a homotrimer, from which the VLPs are assembled. The protease is a homodimer, whose active site consists of two apposed aspartic acid residues. Post-translationally, initially, virus-like particles (VLPs) are composed of the structural unprocessed proteins Gag and Gag-Pol, and also contain the host initiator methionine tRNA (tRNA(i)-Met) which serves as a primer for minus-strand DNA synthesis, and a dimer of genomic Ty RNA. Processing of the polyproteins occurs within the particle and proceeds by an ordered pathway, called maturation. First, the protease (PR) is released by autocatalytic cleavage of the Gag-Pol polyprotein yielding capsid protein p45 and a Pol-p154 precursor protein. This cleavage is a prerequisite for subsequent processing of Pol-p154 at the remaining sites to release the mature structural and catalytic proteins. Maturation takes place prior to the RT reaction and is required to produce transposition-competent VLPs.

It localises to the cytoplasm. The protein localises to the nucleus. The catalysed reaction is DNA(n) + a 2'-deoxyribonucleoside 5'-triphosphate = DNA(n+1) + diphosphate. The enzyme catalyses Endonucleolytic cleavage to 5'-phosphomonoester.. Capsid protein (CA) is the structural component of the virus-like particle (VLP), forming the shell that encapsulates the retrotransposons dimeric RNA genome. The particles are assembled from trimer-clustered units and there are holes in the capsid shells that allow for the diffusion of macromolecules. CA also has nucleocapsid-like chaperone activity, promoting primer tRNA(i)-Met annealing to the multipartite primer-binding site (PBS), dimerization of Ty1 RNA and initiation of reverse transcription. In terms of biological role, the aspartyl protease (PR) mediates the proteolytic cleavages of the Gag and Gag-Pol polyproteins after assembly of the VLP. Its function is as follows. Reverse transcriptase/ribonuclease H (RT) is a multifunctional enzyme that catalyzes the conversion of the retro-elements RNA genome into dsDNA within the VLP. The enzyme displays a DNA polymerase activity that can copy either DNA or RNA templates, and a ribonuclease H (RNase H) activity that cleaves the RNA strand of RNA-DNA heteroduplexes during plus-strand synthesis and hydrolyzes RNA primers. The conversion leads to a linear dsDNA copy of the retrotransposon that includes long terminal repeats (LTRs) at both ends. Functionally, integrase (IN) targets the VLP to the nucleus, where a subparticle preintegration complex (PIC) containing at least integrase and the newly synthesized dsDNA copy of the retrotransposon must transit the nuclear membrane. Once in the nucleus, integrase performs the integration of the dsDNA into the host genome. This Saccharomyces cerevisiae (strain ATCC 204508 / S288c) (Baker's yeast) protein is Transposon Ty1-PL Gag-Pol polyprotein (TY1B-PL).